A 161-amino-acid polypeptide reads, in one-letter code: MPSMDIVSEVNEEELRNAVENSRRELSSRFDFRGKEAEIEHKEFIVTLKAEDDFQCRQLVDILRIQLSKRDVDPSSMEVDDKAIHSGKTFSLKVSFKQGIDSLVAKKLVKQIKDSKLKVQAAIQGDTVRVTGKKRDDLQAVMRLAKESELGQPFQFNNFRD.

Belongs to the YajQ family.

Nucleotide-binding protein. This Shewanella denitrificans (strain OS217 / ATCC BAA-1090 / DSM 15013) protein is Nucleotide-binding protein Sden_0770.